The primary structure comprises 362 residues: Chorismate synthase (362 aa).

NADP(+) is bound at residue Arg-47. Residues 124-126 (RAS), Gly-286, 301-305 (KPTAT), and Arg-327 contribute to the FMN site.

The protein belongs to the chorismate synthase family. Homotetramer. It depends on FMNH2 as a cofactor.

The catalysed reaction is 5-O-(1-carboxyvinyl)-3-phosphoshikimate = chorismate + phosphate. Its pathway is metabolic intermediate biosynthesis; chorismate biosynthesis; chorismate from D-erythrose 4-phosphate and phosphoenolpyruvate: step 7/7. Its function is as follows. Catalyzes the anti-1,4-elimination of the C-3 phosphate and the C-6 proR hydrogen from 5-enolpyruvylshikimate-3-phosphate (EPSP) to yield chorismate, which is the branch point compound that serves as the starting substrate for the three terminal pathways of aromatic amino acid biosynthesis. This reaction introduces a second double bond into the aromatic ring system. This is Chorismate synthase from Synechococcus sp. (strain WH7803).